The chain runs to 172 residues: C-phycocyanin-2 beta subunit (172 aa).

Asparagine 72 bears the N4-methylasparagine mark. (2R,3E)-phycocyanobilin is bound by residues cysteine 82 and cysteine 153.

The protein belongs to the phycobiliprotein family. As to quaternary structure, heterodimer of an alpha and a beta subunit, which further assembles into trimers and the trimers into hexamers. In terms of processing, contains two covalently linked bilin chromophores.

It localises to the cellular thylakoid membrane. In terms of biological role, light-harvesting photosynthetic bile pigment-protein from the phycobiliprotein complex (phycobilisome, PBS). Phycocyanin is the major phycobiliprotein in the PBS rod. In Microchaete diplosiphon (Fremyella diplosiphon), this protein is C-phycocyanin-2 beta subunit (cpcB2).